Consider the following 338-residue polypeptide: Ketol-acid reductoisomerase (NADP(+)) (338 aa).

The KARI N-terminal Rossmann domain occupies methionine 1–threonine 181. Residues tyrosine 24 to glutamine 27, arginine 47, serine 50, threonine 52, and aspartate 82 to glutamine 85 each bind NADP(+). Histidine 107 is a catalytic residue. Residue glycine 133 coordinates NADP(+). The KARI C-terminal knotted domain occupies threonine 182 to isoleucine 327. Positions 190, 194, 226, and 230 each coordinate Mg(2+). Serine 251 provides a ligand contact to substrate.

Belongs to the ketol-acid reductoisomerase family. The cofactor is Mg(2+).

It catalyses the reaction (2R)-2,3-dihydroxy-3-methylbutanoate + NADP(+) = (2S)-2-acetolactate + NADPH + H(+). The enzyme catalyses (2R,3R)-2,3-dihydroxy-3-methylpentanoate + NADP(+) = (S)-2-ethyl-2-hydroxy-3-oxobutanoate + NADPH + H(+). It functions in the pathway amino-acid biosynthesis; L-isoleucine biosynthesis; L-isoleucine from 2-oxobutanoate: step 2/4. Its pathway is amino-acid biosynthesis; L-valine biosynthesis; L-valine from pyruvate: step 2/4. Involved in the biosynthesis of branched-chain amino acids (BCAA). Catalyzes an alkyl-migration followed by a ketol-acid reduction of (S)-2-acetolactate (S2AL) to yield (R)-2,3-dihydroxy-isovalerate. In the isomerase reaction, S2AL is rearranged via a Mg-dependent methyl migration to produce 3-hydroxy-3-methyl-2-ketobutyrate (HMKB). In the reductase reaction, this 2-ketoacid undergoes a metal-dependent reduction by NADPH to yield (R)-2,3-dihydroxy-isovalerate. The sequence is that of Ketol-acid reductoisomerase (NADP(+)) from Pseudomonas fluorescens (strain ATCC BAA-477 / NRRL B-23932 / Pf-5).